A 118-amino-acid polypeptide reads, in one-letter code: MQIGEYELTFIDVAVFVVFLVALNKIVKRMLVAKINEPAKYEIEQLEERDMTMEEIESMRREENRCLVIVEDKIYDLSGSQDLYDNNRDLFESSEGCGPEWAPICARKYPFVGHVLKN.

This is an uncharacterized protein from Caenorhabditis elegans.